We begin with the raw amino-acid sequence, 167 residues long: Signal peptidase complex subunit 2 (167 aa).

Topologically, residues 1–36 (MPKYNVSDFKSKFDKELTNHFNKNGYKQSFVFEDIR) are cytoplasmic. A helical transmembrane segment spans residues 37–57 (LLIAIACIIPAGLAFGIEYVY). Residues 58-68 (GFGVLKSYLKY) lie on the Lumenal side of the membrane. Residues 69 to 89 (LLPLYFLASCLLTFWSSVVKG) traverse the membrane as a helical segment. At 90 to 167 (STVYVATKKE…ISKYLSQIEN (78 aa)) the chain is on the cytoplasmic side.

This sequence belongs to the SPCS2 family. Component of the signal peptidase complex (SPC) composed of a catalytic subunit sec11 and three accessory subunits spc1, spc2 and spc3. The complex induces a local thinning of the ER membrane which is used to measure the length of the signal peptide (SP) h-region of protein substrates. This ensures the selectivity of the complex towards h-regions shorter than 18-20 amino acids. SPC associates with the translocon complex.

Its subcellular location is the endoplasmic reticulum membrane. Component of the signal peptidase complex (SPC) which catalyzes the cleavage of N-terminal signal sequences from nascent proteins as they are translocated into the lumen of the endoplasmic reticulum. Enhances the enzymatic activity of SPC and facilitates the interactions between different components of the translocation site. The chain is Signal peptidase complex subunit 2 (spc2) from Schizosaccharomyces pombe (strain 972 / ATCC 24843) (Fission yeast).